A 389-amino-acid chain; its full sequence is DNA damage checkpoint control protein RAD17 (389 aa).

A disordered region spans residues 358–389 (LAPPSAFPAEETQDPDESYHPAPSNTDIPLFL). Residues 380-389 (PSNTDIPLFL) show a composition bias toward polar residues.

Belongs to the rad1 family. In terms of assembly, component of the checkpoint clamp complex composed of DDC1, MEC3 and RAD17.

The protein resides in the nucleus. Its function is as follows. Component of the checkpoint clamp complex involved in the surveillance mechanism that allows the DNA repair pathways to act to restore the integrity of the DNA prior to DNA synthesis or separation of the replicated chromosomes. This Eremothecium gossypii (strain ATCC 10895 / CBS 109.51 / FGSC 9923 / NRRL Y-1056) (Yeast) protein is DNA damage checkpoint control protein RAD17 (RAD17).